The chain runs to 156 residues: Small ribosomal subunit protein uS7 (156 aa).

It belongs to the universal ribosomal protein uS7 family. In terms of assembly, part of the 30S ribosomal subunit. Contacts proteins S9 and S11.

One of the primary rRNA binding proteins, it binds directly to 16S rRNA where it nucleates assembly of the head domain of the 30S subunit. Is located at the subunit interface close to the decoding center, probably blocks exit of the E-site tRNA. The polypeptide is Small ribosomal subunit protein uS7 (Shewanella sp. (strain MR-7)).